The primary structure comprises 57 residues: Protein new-glue 4 (57 aa).

The signal sequence occupies residues 1-16; sequence MEWKLLLIVLPWLLVC.

It localises to the secreted. The polypeptide is Protein new-glue 4 (ng4) (Drosophila melanogaster (Fruit fly)).